Here is a 223-residue protein sequence, read N- to C-terminus: Rab-like protein 2A (223 aa).

GTP-binding positions include 28-35 (GDSAVGKS), 76-80 (DTAGQ), and 133-136 (NKID). The tract at residues 200 to 223 (KLEQKEEDTSGQEQSDTTKSPSPS) is disordered. A compositionally biased stretch (polar residues) spans 210 to 223 (GQEQSDTTKSPSPS).

It belongs to the small GTPase superfamily. Rab family. Interacts with IFT27, IFT81, IFT172, ATP6V1E1, HK1, LDHC, MAPRE1 and HSPA2. As to expression, isoform 2 is expressed in the testis and localizes to the mid-piece of the sperm tail (at protein level). Isoform 2 is expressed at higher levels in testis than isoform 1. Isoform 1 and isoform 2 are widely expressed and notably within other tissues containing motile cilia including the lung, trachea, brain, ovary and kidney.

Functionally, plays an essential role in male fertility, sperm intra-flagellar transport, and tail assembly. Binds, in a GTP-regulated manner, to a specific set of effector proteins including key proteins involved in cilia development and function and delivers them into the growing sperm tail. This is Rab-like protein 2A (Rabl2) from Mus musculus (Mouse).